The chain runs to 301 residues: tRNA uridine(34) hydroxylase (301 aa).

In terms of domain architecture, Rhodanese spans asparagine 121–serine 212. Cysteine 172 (cysteine persulfide intermediate) is an active-site residue.

The protein belongs to the TrhO family.

It carries out the reaction uridine(34) in tRNA + AH2 + O2 = 5-hydroxyuridine(34) in tRNA + A + H2O. In terms of biological role, catalyzes oxygen-dependent 5-hydroxyuridine (ho5U) modification at position 34 in tRNAs. This chain is tRNA uridine(34) hydroxylase, found in Pelagibacter ubique (strain HTCC1062).